The sequence spans 377 residues: Pyruvate dehydrogenase E1 component subunit alpha, mitochondrial (377 aa).

The transit peptide at 1–26 (MLSNFLKVNSKALGHIRTFASKSGEI) directs the protein to the mitochondrion. His-83, Tyr-109, Arg-110, Gly-156, Val-158, Asp-187, Gly-188, Ala-189, Asn-216, and Tyr-218 together coordinate pyruvate. Positions 109, 110, 156, 158, 187, 188, 189, and 216 each coordinate thiamine diphosphate. Asp-187 is a Mg(2+) binding site. Mg(2+)-binding residues include Asn-216 and Tyr-218. His-283 provides a ligand contact to thiamine diphosphate.

Tetramer of 2 alpha and 2 beta subunits. It depends on thiamine diphosphate as a cofactor. The cofactor is Mg(2+).

The protein localises to the mitochondrion matrix. It carries out the reaction N(6)-[(R)-lipoyl]-L-lysyl-[protein] + pyruvate + H(+) = N(6)-[(R)-S(8)-acetyldihydrolipoyl]-L-lysyl-[protein] + CO2. With respect to regulation, E1 activity is regulated by phosphorylation (inactivation) and dephosphorylation (activation) of the alpha subunit. The pyruvate dehydrogenase complex catalyzes the overall conversion of pyruvate to acetyl-CoA and CO(2). It contains multiple copies of three enzymatic components: pyruvate dehydrogenase (E1), dihydrolipoamide acetyltransferase (E2) and lipoamide dehydrogenase (E3). This chain is Pyruvate dehydrogenase E1 component subunit alpha, mitochondrial (pdhA), found in Dictyostelium discoideum (Social amoeba).